A 568-amino-acid polypeptide reads, in one-letter code: 4-hydroxy-7-methoxy-3-oxo-3,4-dihydro-2H-1,4-benzoxazin-2-yl glucoside beta-D-glucosidase, chloroplastic (568 aa).

Residues Met-1–Ala-50 constitute a chloroplast transit peptide. A beta-D-glucoside is bound by residues Gln-92, His-194, and Asn-239–Glu-240. The active-site Proton donor is Glu-240. A disulfide bridge links Cys-259 with Cys-265. A beta-D-glucoside is bound by residues Tyr-383, Glu-456, Trp-504, Glu-511–Trp-512, and Phe-520. Glu-456 functions as the Nucleophile in the catalytic mechanism.

It belongs to the glycosyl hydrolase 1 family. As to quaternary structure, homohexamer. Expressed in seedlings, mesocotyl, coleoptile, leaf sheath, and roots.

It localises to the plastid. Its subcellular location is the chloroplast. The enzyme catalyses DIMBOA beta-D-glucoside + H2O = DIMBOA + D-glucose. It carries out the reaction DIBOA beta-D-glucoside + H2O = DIBOA + D-glucose. The catalysed reaction is Hydrolysis of terminal, non-reducing beta-D-glucosyl residues with release of beta-D-glucose.. Inhibited by castanospermine, Ag(+) and Cu(2+). 34% inhibition by Zn(2+) and not affected by EDTA. In terms of biological role, involved in defense of young plant parts against pests via the production of benzoxazolinones (hydroxamic acids) from hydroxamic acid glucosides. The preferred substrate is DIBOA-beta-D-glucoside. Can also use esculin and genistein glucoside as substrates, but no activity with salicin, p-nitrophenyl-alpha-glucoside or substrates related to cell wall components. The sequence is that of 4-hydroxy-7-methoxy-3-oxo-3,4-dihydro-2H-1,4-benzoxazin-2-yl glucoside beta-D-glucosidase, chloroplastic from Secale cereale (Rye).